Consider the following 85-residue polypeptide: U4-theraphotoxin-Hhn1m (85 aa).

The first 22 residues, 1 to 22 (MKVTLIAILTCAAVLVLHTTAA), serve as a signal peptide directing secretion. The propeptide occupies 23-48 (EELEAESQLVEVGMPDTELAAVDEER). 3 disulfide bridges follow: Cys52–Cys66, Cys56–Cys77, and Cys71–Cys82.

This sequence belongs to the neurotoxin 12 (Hwtx-2) family. 02 (Hwtx-2) subfamily. As to expression, expressed by the venom gland.

Its subcellular location is the secreted. Functionally, postsynaptic neurotoxin. This chain is U4-theraphotoxin-Hhn1m, found in Cyriopagopus hainanus (Chinese bird spider).